Consider the following 198-residue polypeptide: Phosphoheptose isomerase (198 aa).

The region spanning 36 to 198 is the SIS domain; that stretch reads MIGSLLNNGK…DCLLLGVEDQ (163 aa). A substrate-binding site is contributed by 51 to 53; the sequence is NGG. 2 residues coordinate Zn(2+): histidine 60 and glutamate 64. Residues glutamate 64, 93-94, 119-121, serine 124, and glutamine 174 contribute to the substrate site; these read ND and STS. 2 residues coordinate Zn(2+): glutamine 174 and histidine 182.

The protein belongs to the SIS family. GmhA subfamily. In terms of assembly, homotetramer. Zn(2+) is required as a cofactor.

It is found in the cytoplasm. It catalyses the reaction 2 D-sedoheptulose 7-phosphate = D-glycero-alpha-D-manno-heptose 7-phosphate + D-glycero-beta-D-manno-heptose 7-phosphate. It functions in the pathway carbohydrate biosynthesis; D-glycero-D-manno-heptose 7-phosphate biosynthesis; D-glycero-alpha-D-manno-heptose 7-phosphate and D-glycero-beta-D-manno-heptose 7-phosphate from sedoheptulose 7-phosphate: step 1/1. Catalyzes the isomerization of sedoheptulose 7-phosphate in D-glycero-D-manno-heptose 7-phosphate. This Aromatoleum aromaticum (strain DSM 19018 / LMG 30748 / EbN1) (Azoarcus sp. (strain EbN1)) protein is Phosphoheptose isomerase.